Consider the following 280-residue polypeptide: Large ribosomal subunit protein uL2 (280 aa).

Disordered stretches follow at residues 1–47 (MAIR…NVHG) and 224–280 (VVMN…SKKR). Over residues 23–33 (EITRSTPEKSL) the composition is skewed to basic and acidic residues. Over residues 37 to 47 (LPKKGGRNVHG) the composition is skewed to basic residues. The segment covering 258–268 (RNPNRYSNNMI) has biased composition (polar residues). Positions 270-280 (QRRRTNKSKKR) are enriched in basic residues.

Belongs to the universal ribosomal protein uL2 family. Part of the 50S ribosomal subunit. Forms a bridge to the 30S subunit in the 70S ribosome.

In terms of biological role, one of the primary rRNA binding proteins. Required for association of the 30S and 50S subunits to form the 70S ribosome, for tRNA binding and peptide bond formation. It has been suggested to have peptidyltransferase activity; this is somewhat controversial. Makes several contacts with the 16S rRNA in the 70S ribosome. The chain is Large ribosomal subunit protein uL2 from Corynebacterium diphtheriae (strain ATCC 700971 / NCTC 13129 / Biotype gravis).